The following is a 244-amino-acid chain: 6-carboxyhexanoate--CoA ligase (244 aa).

It belongs to the BioW family. In terms of assembly, homodimer. Mg(2+) serves as cofactor.

It carries out the reaction heptanedioate + ATP + CoA = 6-carboxyhexanoyl-CoA + AMP + diphosphate. It functions in the pathway metabolic intermediate metabolism; pimeloyl-CoA biosynthesis; pimeloyl-CoA from pimelate: step 1/1. Functionally, catalyzes the transformation of pimelate into pimeloyl-CoA with concomitant hydrolysis of ATP to AMP. The sequence is that of 6-carboxyhexanoate--CoA ligase from Hydrogenobacter thermophilus (strain DSM 6534 / IAM 12695 / TK-6).